Consider the following 433-residue polypeptide: Casein kinase 1-like protein 5 (433 aa).

Residues 9-278 form the Protein kinase domain; it reads FRLGRKIGSG…LKRLFRNLFI (270 aa). Residues 15 to 23 and Lys-38 each bind ATP; that span reads IGSGSFGEI. Residue Asp-128 is the Proton acceptor of the active site. A disordered region spans residues 297–433; sequence QSQSGNPQPR…DDVEPQSKAL (137 aa). A compositionally biased stretch (basic and acidic residues) spans 342–359; that stretch reads LKQKDKNGNDSAIAKDKL. The span at 362 to 375 shows a compositional bias: low complexity; it reads GSLNLGRSEGSSSR. Ser-390 is modified (phosphoserine). The span at 407-423 shows a compositional bias: polar residues; the sequence is INNNAGDETAATPQSNG.

The protein belongs to the protein kinase superfamily. CK1 Ser/Thr protein kinase family. Casein kinase I subfamily. In terms of assembly, monomer. Autophosphorylated.

It is found in the cytoplasm. The catalysed reaction is L-seryl-[protein] + ATP = O-phospho-L-seryl-[protein] + ADP + H(+). It carries out the reaction L-threonyl-[protein] + ATP = O-phospho-L-threonyl-[protein] + ADP + H(+). Casein kinases are operationally defined by their preferential utilization of acidic proteins such as caseins as substrates. It can phosphorylate a large number of proteins. In Arabidopsis thaliana (Mouse-ear cress), this protein is Casein kinase 1-like protein 5.